A 236-amino-acid polypeptide reads, in one-letter code: uncharacterized protein (236 aa).

This is an uncharacterized protein from Saccharolobus islandicus (Sulfolobus islandicus).